The chain runs to 509 residues: 2-isopropylmalate synthase (509 aa).

The region spanning 5-267 (IQIFDTTLRD…QTALNLEETK (263 aa)) is the Pyruvate carboxyltransferase domain. 4 residues coordinate Mn(2+): Asp14, His202, His204, and Asn238. The segment at 391–509 (KLETLQLQYV…AAENVEKVGN (119 aa)) is regulatory domain.

Belongs to the alpha-IPM synthase/homocitrate synthase family. LeuA type 1 subfamily. As to quaternary structure, homodimer. Mn(2+) serves as cofactor.

The protein localises to the cytoplasm. It carries out the reaction 3-methyl-2-oxobutanoate + acetyl-CoA + H2O = (2S)-2-isopropylmalate + CoA + H(+). It functions in the pathway amino-acid biosynthesis; L-leucine biosynthesis; L-leucine from 3-methyl-2-oxobutanoate: step 1/4. Catalyzes the condensation of the acetyl group of acetyl-CoA with 3-methyl-2-oxobutanoate (2-ketoisovalerate) to form 3-carboxy-3-hydroxy-4-methylpentanoate (2-isopropylmalate). The sequence is that of 2-isopropylmalate synthase from Staphylococcus aureus (strain MW2).